A 293-amino-acid chain; its full sequence is 4-hydroxy-tetrahydrodipicolinate synthase (293 aa).

A pyruvate-binding site is contributed by T47. The active-site Proton donor/acceptor is the Y136. Catalysis depends on K164, which acts as the Schiff-base intermediate with substrate. I206 contributes to the pyruvate binding site.

The protein belongs to the DapA family. As to quaternary structure, homotetramer; dimer of dimers.

It is found in the cytoplasm. It carries out the reaction L-aspartate 4-semialdehyde + pyruvate = (2S,4S)-4-hydroxy-2,3,4,5-tetrahydrodipicolinate + H2O + H(+). It functions in the pathway amino-acid biosynthesis; L-lysine biosynthesis via DAP pathway; (S)-tetrahydrodipicolinate from L-aspartate: step 3/4. In terms of biological role, catalyzes the condensation of (S)-aspartate-beta-semialdehyde [(S)-ASA] and pyruvate to 4-hydroxy-tetrahydrodipicolinate (HTPA). This is 4-hydroxy-tetrahydrodipicolinate synthase from Listeria welshimeri serovar 6b (strain ATCC 35897 / DSM 20650 / CCUG 15529 / CIP 8149 / NCTC 11857 / SLCC 5334 / V8).